The sequence spans 104 residues: uncharacterized protein (104 aa).

The 102-residue stretch at 3–104 folds into the HIT domain; it reads VFEKIIQGEI…HFHILSGDKH (102 aa). Residues 93–97 carry the Histidine triad motif motif; it reads HLHFH.

This is an uncharacterized protein from Helicobacter pylori (strain J99 / ATCC 700824) (Campylobacter pylori J99).